The primary structure comprises 206 residues: Ribosomal RNA small subunit methyltransferase G (206 aa).

Residues Gly73, Leu78, Val124–Glu125, and Arg139 each bind S-adenosyl-L-methionine.

The protein belongs to the methyltransferase superfamily. RNA methyltransferase RsmG family.

The protein resides in the cytoplasm. The catalysed reaction is guanosine(527) in 16S rRNA + S-adenosyl-L-methionine = N(7)-methylguanosine(527) in 16S rRNA + S-adenosyl-L-homocysteine. Specifically methylates the N7 position of guanine in position 527 of 16S rRNA. The chain is Ribosomal RNA small subunit methyltransferase G from Photobacterium profundum (strain SS9).